The following is a 305-amino-acid chain: LysM and putative peptidoglycan-binding domain-containing protein 3 (305 aa).

Over 1–221 (MTGRNQHNGF…PYYGADWGMR (221 aa)) the chain is Extracellular. An N-linked (GlcNAc...) asparagine glycan is attached at Asn-29. Residues 31–60 (SETEYSEEDGEAFELRSRGRERHHRSTSRD) form a disordered region. The 45-residue stretch at 68–112 (LIREIKEGDTLISISLQYFCTVADIKRANNLLTEQDFFALRSLRI) folds into the LysM domain. Residues 121–144 (TETHNTAPHKSSSPSGTCRITETP) show a composition bias toward polar residues. The segment at 121 to 156 (TETHNTAPHKSSSPSGTCRITETPVSGASLDSTSSS) is disordered. Residues 146–156 (SGASLDSTSSS) are compositionally biased toward low complexity. Residues 222 to 242 (WWTAVAIMLVVGIVTPVFYLL) form a helical membrane-spanning segment. Topologically, residues 243 to 305 (YYEVLMKADV…QHHVKHQEET (63 aa)) are cytoplasmic.

The protein localises to the cell membrane. It localises to the golgi apparatus. Essential for Golgi structural integrity. This is LysM and putative peptidoglycan-binding domain-containing protein 3 (lysmd3) from Danio rerio (Zebrafish).